The primary structure comprises 125 residues: Secreted RxLR effector protein 22 (125 aa).

An N-terminal signal peptide occupies residues 1 to 26 (MRLIYSALVTAAAMVAISNGSTPARG). Positions 21–66 (STPARGNEVETRSLRGGNEVDSSMSDDGERAARGGGRVRSQASGVT) are disordered. The short motif at 32–50 (RSLRGGNEVDSSMSDDGER) is the RxLR-dEER element.

Belongs to the RxLR effector family.

It localises to the secreted. The protein localises to the host nucleus. Its function is as follows. Effector that acts as a broad suppressor of cell death to interrupt plant immunity. Inhibits cell death induced by cell death-inducing proteins, including the PAMP elicitor INF1 from P.infestans. The chain is Secreted RxLR effector protein 22 from Plasmopara viticola (Downy mildew of grapevine).